The following is a 483-amino-acid chain: GTPase Der (483 aa).

2 EngA-type G domains span residues 3-167 and 212-387; these read FTLA…GEER and LRIA…EIWN. GTP-binding positions include 9 to 16, 56 to 60, 119 to 122, 218 to 225, 265 to 269, and 330 to 333; these read GRPNVGKS, DTAGL, NKAE, GRPNAGKS, DTAGM, and NKWD. The KH-like domain maps to 388 to 472; sequence RRISTGRLNR…PIRLSLRTSD (85 aa).

It belongs to the TRAFAC class TrmE-Era-EngA-EngB-Septin-like GTPase superfamily. EngA (Der) GTPase family. Associates with the 50S ribosomal subunit.

GTPase that plays an essential role in the late steps of ribosome biogenesis. The chain is GTPase Der from Brucella suis biovar 1 (strain 1330).